The sequence spans 366 residues: Peptide chain release factor 2 (366 aa).

Gln251 bears the N5-methylglutamine mark.

This sequence belongs to the prokaryotic/mitochondrial release factor family. Post-translationally, methylated by PrmC. Methylation increases the termination efficiency of RF2.

It is found in the cytoplasm. Peptide chain release factor 2 directs the termination of translation in response to the peptide chain termination codons UGA and UAA. This is Peptide chain release factor 2 from Campylobacter concisus (strain 13826).